A 48-amino-acid polypeptide reads, in one-letter code: MQVVVNNAGDLQIVYEMKSAVVKRAEFLGVGGCTRTIGIDLKKGVSNF.

This is an uncharacterized protein from Schizosaccharomyces pombe (strain 972 / ATCC 24843) (Fission yeast).